The following is a 122-amino-acid chain: Large ribosomal subunit protein uL14 (122 aa).

It belongs to the universal ribosomal protein uL14 family. As to quaternary structure, part of the 50S ribosomal subunit. Forms a cluster with proteins L3 and L19. In the 70S ribosome, L14 and L19 interact and together make contacts with the 16S rRNA in bridges B5 and B8.

Binds to 23S rRNA. Forms part of two intersubunit bridges in the 70S ribosome. The polypeptide is Large ribosomal subunit protein uL14 (Nitrosomonas eutropha (strain DSM 101675 / C91 / Nm57)).